Consider the following 152-residue polypeptide: Regulatory protein RecX (152 aa).

This sequence belongs to the RecX family.

It is found in the cytoplasm. Modulates RecA activity. This chain is Regulatory protein RecX, found in Chromobacterium violaceum (strain ATCC 12472 / DSM 30191 / JCM 1249 / CCUG 213 / NBRC 12614 / NCIMB 9131 / NCTC 9757 / MK).